The sequence spans 122 residues: Large ribosomal subunit protein uL14 (122 aa).

Belongs to the universal ribosomal protein uL14 family. In terms of assembly, part of the 50S ribosomal subunit. Forms a cluster with proteins L3 and L19. In the 70S ribosome, L14 and L19 interact and together make contacts with the 16S rRNA in bridges B5 and B8.

In terms of biological role, binds to 23S rRNA. Forms part of two intersubunit bridges in the 70S ribosome. The sequence is that of Large ribosomal subunit protein uL14 from Bacillus subtilis (strain 168).